Reading from the N-terminus, the 1865-residue chain is Transient receptor potential cation channel subfamily M member 7 (1865 aa).

Residue M1 is modified to N-acetylmethionine. At M1–H850 the chain is on the cytoplasmic side. S101 carries the phosphoserine modification. Residues N544–T555 show a composition bias toward low complexity. A disordered region spans residues N544–M575. Residues K560–E573 are compositionally biased toward basic and acidic residues. Residues A851 to V876 traverse the membrane as a helical segment. Topologically, residues Q877–P882 are extracellular. A helical transmembrane segment spans residues S883–I904. The Cytoplasmic portion of the chain corresponds to F905–Y923. A helical membrane pass occupies residues F924–F943. The Extracellular portion of the chain corresponds to G944–H956. Residues V957–L980 traverse the membrane as a helical segment. Residues A981 to N999 lie on the Cytoplasmic side of the membrane. Residues M1000–Y1023 form a helical membrane-spanning segment. Residues P1024–H1025 are Extracellular-facing. Residues E1026–C1066 constitute an intramembrane region (pore-forming). The Extracellular portion of the chain corresponds to G1067 to G1069. The helical transmembrane segment at T1070–N1098 threads the bilayer. The Cytoplasmic portion of the chain corresponds to V1099 to L1865. 3 S-palmitoyl cysteine lipidation sites follow: C1143, C1144, and C1146. T1163 carries the post-translational modification Phosphothreonine; by autocatalysis. Phosphoserine; by autocatalysis is present on residues S1191 and S1193. A coiled-coil region spans residues R1198 to T1250. Position 1224 is a phosphoserine (S1224). Phosphoserine; by autocatalysis occurs at positions 1255 and 1258. T1265 bears the Phosphothreonine; by autocatalysis mark. Position 1287 is a phosphoserine; by autocatalysis (S1287). At S1301 the chain carries Phosphoserine. Phosphoserine; by autocatalysis is present on S1358. 2 positions are modified to phosphoserine: S1361 and S1386. Residues S1386–P1398 show a composition bias toward low complexity. The tract at residues S1386–S1407 is disordered. A phosphoserine; by autocatalysis mark is found at S1387 and S1390. Residues S1395 and S1396 each carry the phosphoserine modification. Phosphoserine; by autocatalysis is present on S1404. At T1405 the chain carries Phosphothreonine; by autocatalysis. At S1407 the chain carries Phosphoserine; by autocatalysis. The residue at position 1435 (T1435) is a Phosphothreonine; by autocatalysis. Residue S1446 is modified to Phosphoserine; by autocatalysis. T1455 carries the post-translational modification Phosphothreonine; by autocatalysis. 2 positions are modified to phosphoserine; by autocatalysis: S1456 and S1463. Residue T1467 is modified to Phosphothreonine. The residue at position 1468 (S1468) is a Phosphoserine; by autocatalysis. T1471 carries the post-translational modification Phosphothreonine; by autocatalysis. S1476 and S1477 each carry phosphoserine; by autocatalysis. T1482 carries the phosphothreonine; by autocatalysis modification. Residues H1492–V1511 are disordered. Phosphoserine; by autocatalysis is present on S1493. The segment covering K1494–V1511 has biased composition (basic and acidic residues). At S1500 the chain carries Phosphoserine. S1504 carries the post-translational modification Phosphoserine; by autocatalysis. Residue T1508 is modified to Phosphothreonine; by autocatalysis. Residues S1513, S1527, and S1533 each carry the phosphoserine; by autocatalysis modification. Positions D1524–S1543 are disordered. Residues T1537 and T1542 each carry the phosphothreonine; by autocatalysis modification. S1543 bears the Phosphoserine; by autocatalysis mark. A Phosphothreonine; by autocatalysis modification is found at T1551. Residues S1567 and S1569 each carry the phosphoserine; by autocatalysis modification. The residue at position 1583 (T1583) is a Phosphothreonine; by autocatalysis. Residues I1594–L1824 form the Alpha-type protein kinase domain. Residues S1598 and S1615 each carry the phosphoserine; by autocatalysis modification. 5 residues coordinate ADP: G1621, G1622, L1623, R1624, and K1648. The residue at position 1660 (S1660) is a Phosphoserine; by autocatalysis. Phosphothreonine; by autocatalysis is present on T1685. ADP contacts are provided by E1720, E1721, and M1723. H1753 is a Zn(2+) binding site. Residue D1767 is the Proton acceptor of the active site. ADP is bound at residue D1777. Residue S1779 is modified to Phosphoserine; by autocatalysis. Zn(2+)-binding residues include H1810, C1812, and C1816. At T1830 the chain carries Phosphothreonine; by autocatalysis. The disordered stretch occupies residues F1836–L1865. Positions L1844–L1865 are enriched in polar residues. Position 1851 is a phosphoserine (S1851). Position 1860 is a phosphoserine; by autocatalysis (S1860).

It in the C-terminal section; belongs to the protein kinase superfamily. Alpha-type protein kinase family. ALPK subfamily. The protein in the N-terminal section; belongs to the transient receptor (TC 1.A.4) family. LTrpC subfamily. TRPM7 sub-subfamily. As to quaternary structure, homotetramer. Interacts with PLCB1. Forms heteromers with TRPM6; heteromeric channels are functionally different from the homomeric channels. Zn(2+) serves as cofactor. In terms of processing, palmitoylated; palmitoylation at Cys-1143, Cys-1144 and Cys-1146 promotes TRPM7 trafficking from the Golgi to the surface membrane. Post-translationally, autophosphorylated; autophosphorylation of C-terminus regulates TRPM7 kinase activity towards its substrates. The C-terminal kinase domain can be cleaved from the channel segment in a cell-type-specific fashion. TRPM7 is cleaved by caspase-8, dissociating the kinase from the ion-conducting pore. The cleaved kinase fragments (M7CKs) can translocate to the cell nucleus and binds chromatin-remodeling complex proteins in a Zn(2+)-dependent manner to ultimately phosphorylate specific Ser/Thr residues of histones.

It localises to the cell membrane. The protein resides in the cytoplasmic vesicle membrane. It is found in the nucleus. It catalyses the reaction L-seryl-[protein] + ATP = O-phospho-L-seryl-[protein] + ADP + H(+). The catalysed reaction is L-threonyl-[protein] + ATP = O-phospho-L-threonyl-[protein] + ADP + H(+). The enzyme catalyses Mg(2+)(in) = Mg(2+)(out). It carries out the reaction Ca(2+)(in) = Ca(2+)(out). It catalyses the reaction Zn(2+)(in) = Zn(2+)(out). Channel displays constitutive activity. Channel activity is negatively regulated by cytosolic Mg(2+) and Mg-ATP. Channel activity is negatively regulated by low intracellular pH. Resting free cytosolic Mg(2+) and Mg-ATP concentrations seem to be sufficient to block native TRPM7 channel activity. TRPM7 channel activity is highly dependent on membrane levels of phosphatidylinositol 4,5 bisphosphate (PIP2). PIP2 hydrolysis negatively regulates TRPM7 channel activity. TRPM7 kinase activity does not affect channel activity. The kinase activity is controlled through the autophosphorylation of a serine/threonine-rich region located N-terminal to the catalytic domain. Functionally, bifunctional protein that combines an ion channel with an intrinsic kinase domain, enabling it to modulate cellular functions either by conducting ions through the pore or by phosphorylating downstream proteins via its kinase domain. The channel is highly permeable to divalent cations, specifically calcium (Ca2+), magnesium (Mg2+) and zinc (Zn2+) and mediates their influx. Controls a wide range of biological processes such as Ca2(+), Mg(2+) and Zn(2+) homeostasis, vesicular Zn(2+) release channel and intracellular Ca(2+) signaling, embryonic development, immune responses, cell motility, proliferation and differentiation. The C-terminal alpha-kinase domain autophosphorylates cytoplasmic residues of TRPM7. In vivo, TRPM7 phosphorylates SMAD2, suggesting that TRPM7 kinase may play a role in activating SMAD signaling pathways. In vitro, TRPM7 kinase phosphorylates ANXA1 (annexin A1), myosin II isoforms and a variety of proteins with diverse cellular functions. The cleaved channel exhibits substantially higher current and potentiates Fas receptor signaling. Its function is as follows. The C-terminal kinase domain can be cleaved from the channel segment in a cell-type-specific fashion. In immune cells, the TRPM7 kinase domain is clipped from the channel domain by caspases in response to Fas-receptor stimulation. The cleaved kinase fragments can translocate to the nucleus, and bind chromatin-remodeling complex proteins in a Zn(2+)-dependent manner to ultimately phosphorylate specific Ser/Thr residues of histones known to be functionally important for cell differentiation and embryonic development. The polypeptide is Transient receptor potential cation channel subfamily M member 7 (TRPM7) (Homo sapiens (Human)).